The primary structure comprises 388 residues: Galactokinase (388 aa).

33-36 contributes to the substrate binding site; it reads EHTD. ATP contacts are provided by residues S67 and 125-131; that span reads GSGLSSS. Residues S131 and E163 each coordinate Mg(2+). D175 functions as the Proton acceptor in the catalytic mechanism. Y225 is a substrate binding site.

This sequence belongs to the GHMP kinase family. GalK subfamily.

Its subcellular location is the cytoplasm. It catalyses the reaction alpha-D-galactose + ATP = alpha-D-galactose 1-phosphate + ADP + H(+). The protein operates within carbohydrate metabolism; galactose metabolism. Functionally, catalyzes the transfer of the gamma-phosphate of ATP to D-galactose to form alpha-D-galactose-1-phosphate (Gal-1-P). This chain is Galactokinase, found in Lactobacillus helveticus (Lactobacillus suntoryeus).